Here is a 105-residue protein sequence, read N- to C-terminus: Putative thioredoxin-5 (105 aa).

Residues 1–104 (MYKEPKNESE…VALENMVKKL (104 aa)) enclose the Thioredoxin domain. Residues Cys-30 and Cys-33 each act as nucleophile in the active site. A disulfide bridge links Cys-30 with Cys-33.

This sequence belongs to the thioredoxin family.

Functionally, participates in various redox reactions through the reversible oxidation of its active center dithiol to a disulfide and catalyzes dithiol-disulfide exchange reactions. The sequence is that of Putative thioredoxin-5 (trxE) from Dictyostelium discoideum (Social amoeba).